We begin with the raw amino-acid sequence, 350 residues long: Inhibin beta E chain (350 aa).

Positions 1–19 are cleaved as a signal peptide; the sequence is MRLPDVQLWLVLLWALVRA. A propeptide spanning residues 20–236 is cleaved from the precursor; sequence QGTGSVCPSC…EPGAGRARRR (217 aa). An N-linked (GlcNAc...) asparagine glycan is attached at N198. Disulfide bonds link C240–C248, C247–C315, C276–C347, and C280–C349.

The protein belongs to the TGF-beta family. In terms of assembly, homodimeric or heterodimeric through association with alpha and beta subunits, linked by one or more disulfide bonds. Inhibins are heterodimers of one alpha and one beta subunit. Activins are homo- or heterodimers of beta subunits only.

It is found in the secreted. Inhibins and activins inhibit and activate, respectively, the secretion of follitropin by the pituitary gland. Inhibins/activins are involved in regulating a number of diverse functions such as hypothalamic and pituitary hormone secretion, gonadal hormone secretion, germ cell development and maturation, erythroid differentiation, insulin secretion, nerve cell survival, embryonic axial development or bone growth, depending on their subunit composition. Inhibins appear to oppose the functions of activins. Its function is as follows. Activin E is a homodimer of INHBE secreted by the liver that plays a crucial role in regulating metabolic homeostasis particularly in lipid metabolism and energy homeostasis. Plays a central role in the regulation of adipose tissue lipolysis by preventing the influx of fatty acids from adipose tissue into the liver. Mechanistically, signals via ACVR1C to activate SMAD2/3 signaling, suppressing PPARG target genes in adipose tissue, thereby reducing liver lipid content and improving glycemic control. Induces beige adipocyte formation and thermogenesis in response to cold exposure. In Homo sapiens (Human), this protein is Inhibin beta E chain (INHBE).